The primary structure comprises 462 residues: 7-hydroxymethyl chlorophyll a reductase, chloroplastic (462 aa).

The transit peptide at 1–20 (MITVVTSRLSLLPPVFSVVN) directs the protein to the chloroplast.

It belongs to the FrhB family. As to quaternary structure, interacts with SGR1, the chlorophyll catabolic enzymes (CCEs) NYC1, NOL and RCCR, and the LHCII complex. Part of a SGR1-CCE-LHCII complex, which acts in chlorophyll breakdown. The cofactor is FAD. Iron-sulfur cluster serves as cofactor.

The protein localises to the plastid. Its subcellular location is the chloroplast. It catalyses the reaction chlorophyll a + 2 oxidized [2Fe-2S]-[ferredoxin] + H2O = 7(1)-hydroxychlorophyll a + 2 reduced [2Fe-2S]-[ferredoxin] + 2 H(+). In terms of biological role, probable iron-sulfur flavoprotein that converts 7-hydroxymethyl chlorophyll a to chlorophyll a using ferredoxin as a reducing equivalent. Catalyzes the reduction of a hydroxymethyl group to a methyl group. Belongs to the chlorophyll catabolic enzymes (CCEs). The sequence is that of 7-hydroxymethyl chlorophyll a reductase, chloroplastic (HCAR) from Arabidopsis thaliana (Mouse-ear cress).